The chain runs to 248 residues: FCS-Like Zinc finger 14 (248 aa).

Polar residues predominate over residues Val-85–Gly-94. The interval Val-85–Thr-108 is disordered. An FLZ-type zinc finger spans residues Gly-181–Glu-224.

This sequence belongs to the FLZ family. As to quaternary structure, interacts with KIN10 and KIN11 via its FLZ-type zinc finger domain. Interacts with KINB1, KINB2 and KINB3 via its N-terminal part.

It localises to the cytoplasm. Its subcellular location is the nucleus. In terms of biological role, may act as an adapter to facilitate the interaction of SnRK1 complex with effector proteins, conferring tissue- and stimulus-type specific differences in the SnRK1 regulation pathway. This Arabidopsis thaliana (Mouse-ear cress) protein is FCS-Like Zinc finger 14.